Reading from the N-terminus, the 161-residue chain is MIIEAKVLKFGDKIDTDIIIPAKYLKYTDPQYLAQHAMEPLDPEFYKKASSGVIIVAGKVFGMGSSREQAAMALKAAGVKAIIAESFARIFFRNAINNGLPVITLQNATKEINQGDLVRVNVETGEIVVNGSKVLKGKGISGMPLEILITGGLITYLKKAS.

This sequence belongs to the LeuD family. LeuD type 2 subfamily. In terms of assembly, heterodimer of LeuC and LeuD.

It catalyses the reaction (2R,3S)-3-isopropylmalate = (2S)-2-isopropylmalate. It functions in the pathway amino-acid biosynthesis; L-leucine biosynthesis; L-leucine from 3-methyl-2-oxobutanoate: step 2/4. In terms of biological role, catalyzes the isomerization between 2-isopropylmalate and 3-isopropylmalate, via the formation of 2-isopropylmaleate. This Sulfolobus acidocaldarius (strain ATCC 33909 / DSM 639 / JCM 8929 / NBRC 15157 / NCIMB 11770) protein is 3-isopropylmalate dehydratase small subunit.